The chain runs to 366 residues: Aminomethyltransferase (366 aa).

This sequence belongs to the GcvT family. In terms of assembly, the glycine cleavage system is composed of four proteins: P, T, L and H.

It carries out the reaction N(6)-[(R)-S(8)-aminomethyldihydrolipoyl]-L-lysyl-[protein] + (6S)-5,6,7,8-tetrahydrofolate = N(6)-[(R)-dihydrolipoyl]-L-lysyl-[protein] + (6R)-5,10-methylene-5,6,7,8-tetrahydrofolate + NH4(+). The glycine cleavage system catalyzes the degradation of glycine. The sequence is that of Aminomethyltransferase from Bacillus anthracis (strain A0248).